We begin with the raw amino-acid sequence, 280 residues long: uncharacterized protein (280 aa).

Basic residues predominate over residues 1 to 10; that stretch reads MSSSIKKLKK. The segment at 1-45 is disordered; that stretch reads MSSSIKKLKKDTKDTDKTPSKKIYQETHNSEDSEDSEDSDNENNT. The segment covering 11–31 has biased composition (basic and acidic residues); sequence DTKDTDKTPSKKIYQETHNSE. Acidic residues predominate over residues 32–41; the sequence is DSEDSEDSDN.

This is an uncharacterized protein from Acanthamoeba polyphaga mimivirus (APMV).